Here is a 217-residue protein sequence, read N- to C-terminus: 3,4-dihydroxy-2-butanone 4-phosphate synthase (217 aa).

D-ribulose 5-phosphate contacts are provided by residues 37 to 38 (RE), Asp-42, 150 to 154 (RRGHT), and Glu-174. Glu-38 serves as a coordination point for Mg(2+). Residue His-153 participates in Mg(2+) binding.

It belongs to the DHBP synthase family. As to quaternary structure, homodimer. It depends on Mg(2+) as a cofactor. The cofactor is Mn(2+).

It catalyses the reaction D-ribulose 5-phosphate = (2S)-2-hydroxy-3-oxobutyl phosphate + formate + H(+). It functions in the pathway cofactor biosynthesis; riboflavin biosynthesis; 2-hydroxy-3-oxobutyl phosphate from D-ribulose 5-phosphate: step 1/1. Its function is as follows. Catalyzes the conversion of D-ribulose 5-phosphate to formate and 3,4-dihydroxy-2-butanone 4-phosphate. The polypeptide is 3,4-dihydroxy-2-butanone 4-phosphate synthase (Shewanella baltica (strain OS223)).